The chain runs to 562 residues: Formate--tetrahydrofolate ligase (562 aa).

71–78 (TPAGEGKS) lines the ATP pocket.

This sequence belongs to the formate--tetrahydrofolate ligase family.

It carries out the reaction (6S)-5,6,7,8-tetrahydrofolate + formate + ATP = (6R)-10-formyltetrahydrofolate + ADP + phosphate. Its pathway is one-carbon metabolism; tetrahydrofolate interconversion. The sequence is that of Formate--tetrahydrofolate ligase from Bacillus cereus (strain G9842).